The following is a 449-amino-acid chain: MFS-type transporter 1 (449 aa).

Residues 1–37 are compositionally biased toward basic and acidic residues; sequence MTHSSSNEHEKEDDRRASDDMMDRDDQNAKEEQDVSK. Residues 1–43 are disordered; the sequence is MTHSSSNEHEKEDDRRASDDMMDRDDQNAKEEQDVSKDAPPVN. 6 helical membrane-spanning segments follow: residues 61-81, 97-117, 127-147, 152-172, 185-205, and 212-232; these read VAGGFCSLFCSFGWINCIGIF, TISWIASLELFILFAGGLVVG, YILLFGTFMHVFGLMMASLST, ILLSQGICSPIGISCLFTPAV, LANGIVAAGSSLGGVIFPIMF, and VGFPWAMRIGAFLILFLLIIA. The N-linked (GlcNAc...) asparagine glycan is linked to Asn-233. The next 6 membrane-spanning stretches (helical) occupy residues 262–282, 298–318, 326–346, 349–369, 390–410, and 420–440; these read LLTTIAAMIFVLGLFLPINYI, YLIPILNAASLFGRTVPGFVA, VHTFMCFFSSVVAFALWLPAA, APIIVFAALYGFGSGAFVAIL, FGVLSLPALVSNPIGGAFVAH, and IWTGCITMLGAILFVVARISL.

The protein belongs to the major facilitator superfamily. Monocarboxylate porter (TC 2.A.1.13) family.

Its subcellular location is the cell membrane. The enzyme catalyses erythrostominone(in) = erythrostominone(out). It carries out the reaction deoxyerythrostominone(in) = deoxyerythrostominone(out). The catalysed reaction is epierythrostominol(in) = epierythrostominol(out). It catalyses the reaction deoxyerythrostominol(in) = deoxyerythrostominol(out). Functionally, MFS-type transporter that mediates the secretion of the 4 major naphthoquinone derivatives produced, erythrostominone (NQ1), deoxyerythrostominone (NQ2), epierythrostominol (NQ4), and deoxyerythrostominol (NQ5), as well as of 3 newly identified naphthoquinone derivatives termed NQ7, NQ8 and NQ9. In Ophiocordyceps sp. (strain BCC 1869) (Entomopathogenic fungus), this protein is MFS-type transporter 1.